A 398-amino-acid polypeptide reads, in one-letter code: uncharacterized protein (398 aa).

One can recognise a BIG2 domain in the interval 240–306; that stretch reads SLNKNIDQLI…SITVTTNDGS (67 aa).

This is an uncharacterized protein from Clostridium acetobutylicum (strain ATCC 824 / DSM 792 / JCM 1419 / IAM 19013 / LMG 5710 / NBRC 13948 / NRRL B-527 / VKM B-1787 / 2291 / W).